A 360-amino-acid polypeptide reads, in one-letter code: Glycerol-1-phosphate dehydrogenase [NAD(P)+] (360 aa).

Residues 108–112 (GRVID) and 130–133 (TAAS) contribute to the NAD(+) site. Substrate is bound at residue D135. S139 serves as a coordination point for NAD(+). Substrate is bound at residue D182. Residues D182 and H262 each coordinate Zn(2+). Residue H266 participates in substrate binding. Position 278 (H278) interacts with Zn(2+).

It belongs to the glycerol-1-phosphate dehydrogenase family. The cofactor is Zn(2+).

The protein resides in the cytoplasm. The catalysed reaction is sn-glycerol 1-phosphate + NAD(+) = dihydroxyacetone phosphate + NADH + H(+). It carries out the reaction sn-glycerol 1-phosphate + NADP(+) = dihydroxyacetone phosphate + NADPH + H(+). It functions in the pathway membrane lipid metabolism; glycerophospholipid metabolism. Functionally, catalyzes the NAD(P)H-dependent reduction of dihydroxyacetonephosphate (DHAP or glycerone phosphate) to glycerol 1-phosphate (G1P). The G1P thus generated is used as the glycerophosphate backbone of phospholipids in the cellular membranes of Archaea. The polypeptide is Glycerol-1-phosphate dehydrogenase [NAD(P)+] (Methanocorpusculum labreanum (strain ATCC 43576 / DSM 4855 / Z)).